Consider the following 515-residue polypeptide: uncharacterized protein (515 aa).

Disordered regions lie at residues 117–188, 362–453, and 496–515; these read DNIL…RKSQ, RSTS…AESM, and GNAV…DYFN. Basic and acidic residues-rich tracts occupy residues 370–380, 388–402, and 428–438; these read KNVESETKQEE, PAED…EVIE, and PIKEIEDKVEP. Over residues 502-515 the composition is skewed to acidic residues; the sequence is ADTESMDDFMDYFN.

This is an uncharacterized protein from Ostreid herpesvirus 1 (isolate France) (OsHV-1).